The sequence spans 247 residues: Proteasome subunit alpha type-7 (247 aa).

Belongs to the peptidase T1A family. The 26S proteasome consists of a 20S proteasome core and two 19S regulatory subunits. The 20S proteasome core is composed of 28 subunits that are arranged in four stacked rings, resulting in a barrel-shaped structure. The two end rings are each formed by seven alpha subunits, and the two central rings are each formed by seven beta subunits. The catalytic chamber with the active sites is on the inside of the barrel.

The protein resides in the cytoplasm. It localises to the nucleus. The proteasome is a multicatalytic proteinase complex which is characterized by its ability to cleave peptides with Arg, Phe, Tyr, Leu, and Glu adjacent to the leaving group at neutral or slightly basic pH. The proteasome has an ATP-dependent proteolytic activity. The chain is Proteasome subunit alpha type-7 (PSA4) from Trypanosoma brucei brucei.